The chain runs to 309 residues: MVDYYEVLGLQRYASPEDIKKAYHKVALKWHPDKNPENKEEAERKFKEVAEAYEVLSNDEKRDIYDKYGTEGLNGGGSHFDDECEYGFTFHKPDDVFKEIFHERDPFSFHFFEDSLEDLLNRPGSSYGNRNRDAGYFFSTASEYPIFEKFSSYDTGYTSQGSLGHEGLTSFSSLAFDNSGMDNYISVTTSDKIVNGRNINTKKIIESDQEREAEDNGELTFFLVNSVANEEGFAKECSWRTQSFNNYSPNSHSSKHVSQYTFVDNDEGGISWVTSNRDPPIFSAGVKEGGKRKKKKRKEVQKKSTKRNC.

The J domain maps to 3 to 69 (DYYEVLGLQR…EKRDIYDKYG (67 aa)). Residues 282-309 (FSAGVKEGGKRKKKKRKEVQKKSTKRNC) form a disordered region. Positions 290 to 309 (GKRKKKKRKEVQKKSTKRNC) are enriched in basic residues.

Functionally, probably acts as a co-chaperone. This is DnaJ homolog subfamily B member 7 (DNAJB7) from Homo sapiens (Human).